Consider the following 202-residue polypeptide: Small ribosomal subunit protein uS4 (202 aa).

Residues Met-1–Arg-13 show a composition bias toward basic residues. The interval Met-1 to Arg-42 is disordered. The 63-residue stretch at Asn-90 to Asn-152 folds into the S4 RNA-binding domain.

This sequence belongs to the universal ribosomal protein uS4 family. In terms of assembly, part of the 30S ribosomal subunit. Contacts protein S5. The interaction surface between S4 and S5 is involved in control of translational fidelity.

Its function is as follows. One of the primary rRNA binding proteins, it binds directly to 16S rRNA where it nucleates assembly of the body of the 30S subunit. Functionally, with S5 and S12 plays an important role in translational accuracy. In Prochlorococcus marinus (strain MIT 9515), this protein is Small ribosomal subunit protein uS4.